A 137-amino-acid chain; its full sequence is Prostate and testis expressed protein 13 (137 aa).

An N-terminal signal peptide occupies residues 1 to 20; it reads MFQKLLLSVFIILLMDVGER. The region spanning 28-114 is the UPAR/Ly6 domain; it reads RHCNLCSHYD…CIDRNYCNDG (87 aa). Disulfide bonds link cysteine 30–cysteine 60, cysteine 33–cysteine 41, cysteine 48–cysteine 84, cysteine 87–cysteine 104, and cysteine 105–cysteine 111. N-linked (GlcNAc...) asparagine glycosylation is present at asparagine 57.

It belongs to the PATE family. As to expression, strongly expressed in the epididymis, including the initial segment, caput, corpus and cauda regions. Weakly expressed in prostate.

The protein resides in the secreted. The sequence is that of Prostate and testis expressed protein 13 from Mus musculus (Mouse).